Consider the following 159-residue polypeptide: Ribosomal RNA large subunit methyltransferase H (159 aa).

Residues Gly-108 and Phe-127 to Phe-132 each bind S-adenosyl-L-methionine.

The protein belongs to the RNA methyltransferase RlmH family. Homodimer.

Its subcellular location is the cytoplasm. It catalyses the reaction pseudouridine(1915) in 23S rRNA + S-adenosyl-L-methionine = N(3)-methylpseudouridine(1915) in 23S rRNA + S-adenosyl-L-homocysteine + H(+). Specifically methylates the pseudouridine at position 1915 (m3Psi1915) in 23S rRNA. In Magnetococcus marinus (strain ATCC BAA-1437 / JCM 17883 / MC-1), this protein is Ribosomal RNA large subunit methyltransferase H.